The following is a 490-amino-acid chain: GTPase Der (490 aa).

EngA-type G domains lie at 3–166 (PVVA…MEDL) and 203–376 (IKLA…DSST). Residues 9–16 (GRPNVGKS), 56–60 (DTGGI), 118–121 (NKTD), 209–216 (GRPNVGKS), 256–260 (DTAGV), and 321–324 (NKWD) each bind GTP. The KH-like domain maps to 377 to 461 (RRVGTSMLTR…PIRIQFKEGE (85 aa)).

The protein belongs to the TRAFAC class TrmE-Era-EngA-EngB-Septin-like GTPase superfamily. EngA (Der) GTPase family. Associates with the 50S ribosomal subunit.

Functionally, GTPase that plays an essential role in the late steps of ribosome biogenesis. This chain is GTPase Der, found in Escherichia coli O17:K52:H18 (strain UMN026 / ExPEC).